Consider the following 255-residue polypeptide: uncharacterized protein (255 aa).

Residues 1–10 (MSDSIHRRKV) are compositionally biased toward basic residues. The disordered stretch occupies residues 1–78 (MSDSIHRRKV…SPMRGLPMEE (78 aa)). The segment covering 44-61 (VFERSFSEPSLNRHRDGQ) has biased composition (basic and acidic residues).

This is an uncharacterized protein from Arabidopsis thaliana (Mouse-ear cress).